We begin with the raw amino-acid sequence, 573 residues long: MLO-like protein 2 (573 aa).

Topologically, residues 1–15 (MADQVKERTLEETST) are extracellular. The helical transmembrane segment at 16-36 (WAVAVVCFVLLFISIVLEHSI) threads the bilayer. The Cytoplasmic portion of the chain corresponds to 37–61 (HKIGTWFKKKHKQALFEALEKVKAE). The helical transmembrane segment at 62–82 (LMLLGFISLLLTIGQTPISNI) threads the bilayer. Residues 83 to 164 (CISQKVASTM…VSAYGIHQLH (82 aa)) are Extracellular-facing. A helical transmembrane segment spans residues 165–185 (IFIFVLAVVHVVYCIVTYAFG). Residues 186 to 287 (KIKMRTWKSW…KYIQRSLEKD (102 aa)) are Cytoplasmic-facing. A helical transmembrane segment spans residues 288–308 (FKTVVEISPVIWFVAVLFLLT). The Extracellular segment spans residues 309 to 317 (NSYGLRSYL). The chain crosses the membrane as a helical span at residues 318 to 338 (WLPFIPLVVILIVGTKLEVII). At 339–371 (TKLGLRIQEKGDVVRGAPVVQPGDDLFWFGKPR) the chain is on the cytoplasmic side. Residues 372 to 392 (FILFLIHLVLFTNAFQLAFFA) traverse the membrane as a helical segment. Residues 393–415 (WSTYEFNLNNCFHESTADVVIRL) lie on the Extracellular side of the membrane. The chain crosses the membrane as a helical span at residues 416–436 (VVGAVVQILCSYVTLPLYALV). The Cytoplasmic portion of the chain corresponds to 437–573 (TQMGSKMKPT…KSLRDFSFKK (137 aa)). The calmodulin-binding stretch occupies residues 450-471 (DRVATALKKWHHTAKNETKHGR). The segment at 462–573 (TAKNETKHGR…KSLRDFSFKK (112 aa)) is disordered. Polar residues-rich tracts occupy residues 473–490 (SGSNTPFSSRPTTPTHGS) and 498–513 (NFNNRSVENYPSSPSP). At serine 512 the chain carries Phosphoserine. Basic and acidic residues predominate over residues 522-548 (EHQFWDPESQHQEAETSTHHSLAHESS).

It belongs to the MLO family.

The protein resides in the membrane. Its function is as follows. May be involved in modulation of pathogen defense and leaf cell death. Activity seems to be regulated by Ca(2+)-dependent calmodulin binding and seems not to require heterotrimeric G proteins. This is MLO-like protein 2 (MLO2) from Arabidopsis thaliana (Mouse-ear cress).